A 294-amino-acid chain; its full sequence is Putative glucose-6-phosphate 1-epimerase (294 aa).

2 residues coordinate substrate: R74 and R99. H164 is an active-site residue. D208 is a substrate binding site. Residue E267 is part of the active site.

This sequence belongs to the glucose-6-phosphate 1-epimerase family. As to quaternary structure, monomer in solution.

It catalyses the reaction alpha-D-glucose 6-phosphate = beta-D-glucose 6-phosphate. In terms of biological role, probably functions as a hexose-6-phosphate 1-epimerase. This Salmonella typhimurium (strain LT2 / SGSC1412 / ATCC 700720) protein is Putative glucose-6-phosphate 1-epimerase.